Here is a 159-residue protein sequence, read N- to C-terminus: Serine-protein kinase RsbW (159 aa).

This sequence belongs to the anti-sigma-factor family.

It catalyses the reaction L-seryl-[protein] + ATP = O-phospho-L-seryl-[protein] + ADP + H(+). The enzyme catalyses L-threonyl-[protein] + ATP = O-phospho-L-threonyl-[protein] + ADP + H(+). Its function is as follows. Negative regulator of sigma-B activity. Phosphorylates and inactivates its specific antagonist protein, RsbV. Upon phosphorylation of RsbV, RsbW is released and binds to sigma-B, thereby blocking its ability to form an RNA polymerase holoenzyme (E-sigma-B). The sequence is that of Serine-protein kinase RsbW from Staphylococcus aureus.